The following is a 257-amino-acid chain: Flap endonuclease Xni (257 aa).

Residue Asp-112 participates in Mg(2+) binding. Residues 169–256 (EQKKLVEFWA…LGFSLKQLRL (88 aa)) form the 5'-3' exonuclease domain. Phe-179, Ala-180, Pro-188, Val-190, and Ile-193 together coordinate K(+). Residues 192–197 (GIGTKS) are interaction with DNA.

Belongs to the Xni family. The cofactor is Mg(2+). It depends on K(+) as a cofactor.

Functionally, has flap endonuclease activity. During DNA replication, flap endonucleases cleave the 5'-overhanging flap structure that is generated by displacement synthesis when DNA polymerase encounters the 5'-end of a downstream Okazaki fragment. The protein is Flap endonuclease Xni of Pseudoalteromonas translucida (strain TAC 125).